A 153-amino-acid polypeptide reads, in one-letter code: Transcriptional repressor NrdR (153 aa).

The segment at 3-34 (CPFCNNISTNVKDSRSIEDDMLIRRRRVCPVC) is a zinc-finger region. An ATP-cone domain is found at 49-139 (LMVIKKNGGL…VYMNFKNIND (91 aa)).

The protein belongs to the NrdR family. Requires Zn(2+) as cofactor.

Negatively regulates transcription of bacterial ribonucleotide reductase nrd genes and operons by binding to NrdR-boxes. In Ehrlichia ruminantium (strain Gardel), this protein is Transcriptional repressor NrdR.